The following is a 228-amino-acid chain: DNA repair protein RecO (228 aa).

The protein belongs to the RecO family.

In terms of biological role, involved in DNA repair and RecF pathway recombination. The sequence is that of DNA repair protein RecO from Mannheimia succiniciproducens (strain KCTC 0769BP / MBEL55E).